We begin with the raw amino-acid sequence, 368 residues long: MQHHKVAIIGAGAAGIGMAITLKDFGITDVIILEKGTVGHSFKHWPKSTRTITPSFTSNGFGMPDMNAISMDTSPAFTFNEEHISGETYAEYLQVVANHYELNIFENTVVTNISADDAYYTIATTTETYHADYIFVATGDYNFPKKPFKYGIHYSEIEDFDNFNKGQYVVIGGNESGFDAAYQLAKNGSDIALYTSTTGLNDPDADPSVRLSPYTRQRLGNVIKQGARIEMNVHYTVKDIDFNNGQYHISFDSGQSVHTPHEPILATGFDATKNPIVQQLFVTTNQDIKLTTHDESTRYPNIFMIGATVENDNAKLCYIYKFRARFAVLAHLLTQREGLPAKQEVIENYQKNQMYLDDYSCCEVSCTC.

FAD contacts are provided by residues Ala-14, Glu-34, Ser-41, 52-53, Val-110, Ala-307, and Ile-319; that span reads IT.

FAD serves as cofactor.

FAD-binding protein that may have monooxygenase activity using NADPH and/or NADH as an electron donor. The protein is Putative flavoprotein monooxygenase of Staphylococcus aureus (strain Mu50 / ATCC 700699).